We begin with the raw amino-acid sequence, 1220 residues long: Post-transcriptional regulator MKT1L (1220 aa).

A disordered region spans residues 1-107; it reads MRKAGANRNN…SPWNSPPQQT (107 aa). A compositionally biased stretch (basic residues) spans 34 to 70; the sequence is PHHHQHQHHHQHQHQHQHQHQHPHQHPHQHHHHHPHH.

It belongs to the XPG/RAD2 endonuclease family. As to quaternary structure, forms a complex composed of at least MKT1L, PBP1, XAC1 and LSM12.

The protein localises to the cytoplasm. Involved in post-transcriptional regulation of gene expression. The chain is Post-transcriptional regulator MKT1L from Trypanosoma brucei brucei (strain 927/4 GUTat10.1).